Consider the following 334-residue polypeptide: Protein POLAR-like 1 (334 aa).

Positions 53 to 63 (IRTSSEDDHHR) are enriched in basic and acidic residues. The interval 53 to 74 (IRTSSEDDHHRVGQFSDSPPPT) is disordered. Positions 273 to 300 (ETRQQEEIKELEIALDDAKQRLHLKETE) form a coiled coil.

The protein localises to the cytoplasm. The protein resides in the cell cortex. Functionally, acts as a stomatal lineage scaffold which regulates subcellular localization and transient polarization of kinases (e.g. ASK7/BIN2 and ASK3/SK12) involved in asymmetric cell division (ACD) in a BASL-dependent manner. The sequence is that of Protein POLAR-like 1 from Arabidopsis thaliana (Mouse-ear cress).